The sequence spans 687 residues: MILRNPLKSPFNSELSIFKALLMSTITESISNDYSRFISILGVCKTTDQFKQLHSQSITRGVAPNPTFQKKLFVFWCSRLGGHVSYAYKLFVKIPEPDVVVWNNMIKGWSKVDCDGEGVRLYLNMLKEGVTPDSHTFPFLLNGLKRDGGALACGKKLHCHVVKFGLGSNLYVQNALVKMYSLCGLMDMARGVFDRRCKEDVFSWNLMISGYNRMKEYEESIELLVEMERNLVSPTSVTLLLVLSACSKVKDKDLCKRVHEYVSECKTEPSLRLENALVNAYAACGEMDIAVRIFRSMKARDVISWTSIVKGYVERGNLKLARTYFDQMPVRDRISWTIMIDGYLRAGCFNESLEIFREMQSAGMIPDEFTMVSVLTACAHLGSLEIGEWIKTYIDKNKIKNDVVVGNALIDMYFKCGCSEKAQKVFHDMDQRDKFTWTAMVVGLANNGQGQEAIKVFFQMQDMSIQPDDITYLGVLSACNHSGMVDQARKFFAKMRSDHRIEPSLVHYGCMVDMLGRAGLVKEAYEILRKMPMNPNSIVWGALLGASRLHNDEPMAELAAKKILELEPDNGAVYALLCNIYAGCKRWKDLREVRRKIVDVAIKKTPGFSLIEVNGFAHEFVAGDKSHLQSEEIYMKLEELAQESTFAAYLPDTSELLFEAGDAYSVANRFVRLSGHPGTKNWKSTVR.

13 PPR repeats span residues 98 to 132 (DVVVWNNMIKGWSKVDCDGEGVRLYLNMLKEGVTP), 133 to 168 (DSHTFPFLLNGLKRDGGALACGKKLHCHVVKFGLGS), 169 to 199 (NLYVQNALVKMYSLCGLMDMARGVFDRRCKE), 200 to 234 (DVFSWNLMISGYNRMKEYEESIELLVEMERNLVSP), 235 to 269 (TSVTLLLVLSACSKVKDKDLCKRVHEYVSECKTEP), 270 to 304 (SLRLENALVNAYAACGEMDIAVRIFRSMKARDVIS), 305 to 331 (WTSIVKGYVERGNLKLARTYFDQMPVR), 332 to 366 (DRISWTIMIDGYLRAGCFNESLEIFREMQSAGMIP), 367 to 401 (DEFTMVSVLTACAHLGSLEIGEWIKTYIDKNKIKN), 402 to 432 (DVVVGNALIDMYFKCGCSEKAQKVFHDMDQR), 433 to 467 (DKFTWTAMVVGLANNGQGQEAIKVFFQMQDMSIQP), 468 to 498 (DDITYLGVLSACNHSGMVDQARKFFAKMRSD), and 504 to 534 (SLVHYGCMVDMLGRAGLVKEAYEILRKMPMN). The interval 539-614 (VWGALLGASR…TPGFSLIEVN (76 aa)) is type E motif. Positions 615 to 645 (GFAHEFVAGDKSHLQSEEIYMKLEELAQEST) are type E(+) motif.

The protein belongs to the PPR family. PCMP-E subfamily.

The chain is Putative pentatricopeptide repeat-containing protein At3g15930 (PCMP-E51) from Arabidopsis thaliana (Mouse-ear cress).